The sequence spans 86 residues: Small ribosomal subunit protein bS16 (86 aa).

This sequence belongs to the bacterial ribosomal protein bS16 family.

This chain is Small ribosomal subunit protein bS16, found in Stenotrophomonas maltophilia (strain K279a).